The sequence spans 381 residues: 4-hydroxyphenylpyruvate dioxygenase (381 aa).

VOC domains follow at residues 22 to 156 and 184 to 338; these read GMDA…LVDR and AIDH…IFTK. Fe cation-binding residues include H187, H270, and E349.

The protein belongs to the 4HPPD family. Homodimer. Fe cation serves as cofactor.

It carries out the reaction 3-(4-hydroxyphenyl)pyruvate + O2 = homogentisate + CO2. It participates in amino-acid degradation; L-phenylalanine degradation; acetoacetate and fumarate from L-phenylalanine: step 3/6. The sequence is that of 4-hydroxyphenylpyruvate dioxygenase (hpd) from Streptomyces avermitilis (strain ATCC 31267 / DSM 46492 / JCM 5070 / NBRC 14893 / NCIMB 12804 / NRRL 8165 / MA-4680).